Consider the following 337-residue polypeptide: Monoacylglycerol lipase abhd6-A (337 aa).

Residues 1 to 19 are Extracellular-facing; that stretch reads MDLDVLNMFLVAGGTLLVP. Residues 20–42 form a helical; Signal-anchor for type II membrane protein membrane-spanning segment; that stretch reads ILAFVTSFLLWPAALIKIYYWYW. At 43 to 337 the chain is on the cytoplasmic side; sequence RRALGMQVKF…QSTENNKKHE (295 aa). The AB hydrolase-1 domain maps to 73–313; sequence SVLMLHGFSA…CGHSVVMERP (241 aa). Ser-148 (nucleophile) is an active-site residue. Catalysis depends on charge relay system residues Asp-278 and His-306.

It belongs to the AB hydrolase superfamily.

Its subcellular location is the late endosome membrane. The protein resides in the lysosome membrane. The protein localises to the mitochondrion membrane. It carries out the reaction Hydrolyzes glycerol monoesters of long-chain fatty acids.. The enzyme catalyses 1-octanoylglycerol + H2O = octanoate + glycerol + H(+). It catalyses the reaction 1-decanoylglycerol + H2O = decanoate + glycerol + H(+). The catalysed reaction is 1-dodecanoylglycerol + H2O = dodecanoate + glycerol + H(+). It carries out the reaction 1-tetradecanoylglycerol + H2O = tetradecanoate + glycerol + H(+). The enzyme catalyses 2-hexadecanoylglycerol + H2O = glycerol + hexadecanoate + H(+). It catalyses the reaction 2-(9Z-octadecenoyl)-glycerol + H2O = glycerol + (9Z)-octadecenoate + H(+). The catalysed reaction is 1-(9Z-octadecenoyl)-glycerol + H2O = glycerol + (9Z)-octadecenoate + H(+). It carries out the reaction 2-(9Z,12Z-octadecadienoyl)-glycerol + H2O = (9Z,12Z)-octadecadienoate + glycerol + H(+). The enzyme catalyses 2-(5Z,8Z,11Z,14Z-eicosatetraenoyl)-glycerol + H2O = glycerol + (5Z,8Z,11Z,14Z)-eicosatetraenoate + H(+). It catalyses the reaction 1-(5Z,8Z,11Z,14Z-eicosatetraenoyl)-glycerol + H2O = glycerol + (5Z,8Z,11Z,14Z)-eicosatetraenoate + H(+). The catalysed reaction is 1-(9Z,12Z-octadecadienoyl)-glycerol + H2O = (9Z,12Z)-octadecadienoate + glycerol + H(+). It carries out the reaction 3-(9Z-octadecenoyl)-sn-glycero-1-phospho-(3'-(9Z-octadecenoyl)-1'-sn-glycerol) + H2O = 3-(9Z-octadecenoyl)-sn-glycero-1-phospho-(1'-sn-glycerol) + (9Z)-octadecenoate + H(+). The enzyme catalyses (S,S)-2-(9Z-octadecenoyl)-sn-glycero-1-phospho-(2'-(9Z-octadecenoyl)-1'-sn-glycerol) + H2O = (S,S)-2-(9Z-octadecenoyl)-sn-glycero-1-phospho-(1'-sn-glycerol) + (9Z)-octadecenoate + H(+). It catalyses the reaction (R,R)-2-(9Z-octadecenoyl)-sn-glycero-3-phospho-(2'-(9Z-octadecenoyl)-3'-sn-glycerol) + H2O = (R,R)-2-(9Z-octadecenoyl)-sn-glycero-3-phospho-(3'-sn-glycerol) + (9Z)-octadecenoate + H(+). Functionally, lipase that preferentially hydrolysis medium-chain saturated monoacylglycerols including 2-arachidonoylglycerol. Through 2-arachidonoylglycerol degradation may regulate endocannabinoid signaling pathways. Also has a lysophosphatidyl lipase activity with a preference for lysophosphatidylglycerol among other lysophospholipids. Also able to degrade bis(monoacylglycero)phosphate (BMP) and constitutes the major enzyme for BMP catabolism. BMP, also known as lysobisphosphatidic acid, is enriched in late endosomes and lysosomes and plays a key role in the formation of intraluminal vesicles and in lipid sorting. This chain is Monoacylglycerol lipase abhd6-A (abhd6-a), found in Xenopus laevis (African clawed frog).